The sequence spans 240 residues: NDR1/HIN1-like protein 2 (240 aa).

The chain crosses the membrane as a helical span at residues 57-77 (NILIAVAVILGVAALILWLIF). N-linked (GlcNAc...) asparagine glycosylation is found at N109, N141, N151, and N223.

In terms of tissue distribution, expressed at low levels in roots, rosette leaves, cauline leaves, stems, flowers and siliques.

Its subcellular location is the cell membrane. In terms of biological role, may play a role in plant immunity. The protein is NDR1/HIN1-like protein 2 of Arabidopsis thaliana (Mouse-ear cress).